The primary structure comprises 695 residues: MPRGRGGGGGGLRQASATSAPLASPSYYERVGQLQQALRDSEKKRLDLEDKLYEYNKSDKCRAKLKCAKLKKYLKEVCESERRAQVRNQGYLKKFECVQTYVEHLTTNTEKLQKLKTEYEAEVKRMRLLSKDSLGMSDEDGAKDAVQAGINSGTAMSRGLYQPATIFMGRQMSAISSIEDFSTELKSNQPTKNFSISDPHSHQQTAQSSCVTDSCVVQTNGDTQCLNKSDKIHGKTSLQTGEKAPVTSYVLSAEEQTHCLEIGSSTQHSKSNLSEGRKSAELHSSLQERLSPENSITDLKCDSSSRSEGSDREILTQEHIEVREERAGPLVPMMAASEHCTSAKKWAGEKHSAWEASSDDLDHGDSKSQKAVLKHEEEQEEGSSCSSSDLTVSVSEDDLILESLAALSNPGAKMAGKDGMQALRAAHTEPRQDSLFTEYVLQTQSFPDSKREPSPDSPRQPEKVPDCHLLKTRGQCMKEHDNSLKEEATTLLKKVLTEECDHRSAIHSNESSCSMPSILNDNNGIKEAKPALRLNSVLTREQEVSSGCGDESKEESIAAAPGTGHREADLVPSELFQFSLGAAMKETKAYQLLKKSTLQDNSNQAEERFESQFSGLDIGGSMFTTKTAHKIASEASFSSSEGSPLSRHESKRDPVTTIKSNAFWGESDDSNSEIEAALRPRDHDMPDDFDDFYDT.

Gly residues predominate over residues 1–12 (MPRGRGGGGGGL). The interval 1–24 (MPRGRGGGGGGLRQASATSAPLAS) is disordered. The span at 15 to 24 (ASATSAPLAS) shows a compositional bias: low complexity. Coiled-coil stretches lie at residues 29-57 (ERVG…EYNK) and 102-132 (VEHL…LSKD). 4 disordered regions span residues 261-313 (EIGS…SDRE), 351-391 (HSAW…SDLT), 444-465 (QSFP…EKVP), and 633-695 (SEAS…FYDT). Polar residues-rich tracts occupy residues 263–274 (GSSTQHSKSNLS) and 282–297 (LHSS…NSIT). Basic and acidic residues-rich tracts occupy residues 299-313 (LKCD…SDRE) and 360-377 (DLDH…KHEE). Over residues 382–391 (GSSCSSSDLT) the composition is skewed to low complexity. Threonine 391 bears the Phosphothreonine; by PLK1 mark. Residues 448–465 (DSKREPSPDSPRQPEKVP) show a composition bias toward basic and acidic residues. A compositionally biased stretch (low complexity) spans 633–645 (SEASFSSSEGSPL). A phosphoserine mark is found at serine 667, serine 670, and serine 672. Residues 676–686 (AALRPRDHDMP) are compositionally biased toward basic and acidic residues.

It belongs to the kizuna family. As to quaternary structure, interacts with AKAP9, CEP72, ODF2, PCNT and TUBGCP2. Phosphorylation at Thr-391 by PLK1 is not needed for centrosomal localization or pericentriolar material expansion but is indispensable for spindle-pole stabilization.

Its subcellular location is the cytoplasm. It is found in the cytoskeleton. It localises to the microtubule organizing center. The protein localises to the centrosome. The protein resides in the cilium basal body. Centrosomal protein required for establishing a robust mitotic centrosome architecture that can endure the forces that converge on the centrosomes during spindle formation. Required for stabilizing the expanded pericentriolar material around the centriole. The polypeptide is Centrosomal protein kizuna (Kiz) (Mus musculus (Mouse)).